The following is a 76-amino-acid chain: RNA-binding protein KhpA (76 aa).

The KH domain maps to 29 to 76; sequence QNIIELRVSPKDVGKVIGKNGRIAKSLRAILTAASVKAGKNFSLEIID.

The protein belongs to the KhpA RNA-binding protein family. As to quaternary structure, forms a complex with KhpB.

It localises to the cytoplasm. A probable RNA chaperone. Forms a complex with KhpB which binds to cellular RNA and controls its expression. Plays a role in peptidoglycan (PG) homeostasis and cell length regulation. The sequence is that of RNA-binding protein KhpA from Leptospira interrogans serogroup Icterohaemorrhagiae serovar copenhageni (strain Fiocruz L1-130).